Reading from the N-terminus, the 545-residue chain is Methionine--tRNA ligase (545 aa).

Residues 13-23 carry the 'HIGH' region motif; the sequence is PYANGPLHIGH. Residues C144, C147, C157, and C160 each contribute to the Zn(2+) site. Residues 330-334 carry the 'KMSKS' region motif; the sequence is KISKS. K333 provides a ligand contact to ATP.

It belongs to the class-I aminoacyl-tRNA synthetase family. MetG type 1 subfamily. As to quaternary structure, monomer. Zn(2+) serves as cofactor.

The protein resides in the cytoplasm. It catalyses the reaction tRNA(Met) + L-methionine + ATP = L-methionyl-tRNA(Met) + AMP + diphosphate. Is required not only for elongation of protein synthesis but also for the initiation of all mRNA translation through initiator tRNA(fMet) aminoacylation. The sequence is that of Methionine--tRNA ligase from Blochmanniella floridana.